We begin with the raw amino-acid sequence, 444 residues long: Exodeoxyribonuclease 7 large subunit (444 aa).

This sequence belongs to the XseA family. As to quaternary structure, heterooligomer composed of large and small subunits.

It is found in the cytoplasm. It carries out the reaction Exonucleolytic cleavage in either 5'- to 3'- or 3'- to 5'-direction to yield nucleoside 5'-phosphates.. Functionally, bidirectionally degrades single-stranded DNA into large acid-insoluble oligonucleotides, which are then degraded further into small acid-soluble oligonucleotides. In Aliivibrio salmonicida (strain LFI1238) (Vibrio salmonicida (strain LFI1238)), this protein is Exodeoxyribonuclease 7 large subunit.